The sequence spans 385 residues: MINLKELKILHTSDWHLGVTSWTSSRPVDRREELKKALDKVVEEAEKREVDLILLTGDLLHSRNNPSVVALHDLLDYLKRMMRTAPVVVLPGNHDWKGLKLFGNFVTSISSDITFVMSFEPVDVEAKRGQKVRILPFPYPDESEALRKNEGDFRFFLESRLNKLYEEALKKEDFAIFMGHFTVEGLAGYAGIEQGREIIINRALIPSVVDYAALGHIHSFREIQKQPLTIYPGSLIRIDFGEEADEKGAVFVELKRGEPPRYERIDASPLPLKTLYYKKIDTSALKSIRDFCRNFPGYVRVVYEEDSGILPDLMGEIDNLVKIERKSRREIEEVLRESPEEFKEELDKLDYFELFKEYLKKREENHEKLLKILDELLDEVKKSEA.

Positions 14, 16, and 58 each coordinate Mn(2+). Histidine 94 functions as the Proton donor in the catalytic mechanism. Residues histidine 180, histidine 216, and histidine 218 each coordinate Mn(2+).

Belongs to the MRE11/RAD32 family. Homodimer. Forms a heterotetramer composed of two Mre11 subunits and two Rad50 subunits. Homodimerization facilitates DNA binding. It depends on Mn(2+) as a cofactor.

With respect to regulation, nuclease activity is regulated by Rad50. The mirin-derivative PFM39, specifically inhibits the 3'-5' exonuclease activity. The N-alkylated mirin-derivatives PFM03 and PFM01 specifically inhibit the endonuclease activity. In terms of biological role, part of the Rad50/Mre11 complex, which is involved in the early steps of DNA double-strand break (DSB) repair. The complex may facilitate opening of the processed DNA ends to aid in the recruitment of HerA and NurA. Mre11 binds to DSB ends and has both double-stranded 3'-5' exonuclease activity and single-stranded endonuclease activity. The polypeptide is DNA double-strand break repair protein Mre11 (Thermotoga maritima (strain ATCC 43589 / DSM 3109 / JCM 10099 / NBRC 100826 / MSB8)).